We begin with the raw amino-acid sequence, 135 residues long: Fatty acid-binding protein 5 (135 aa).

At Ala2 the chain carries N-acetylalanine. The residue at position 17 (Lys17) is an N6-acetyllysine. The residue at position 22 (Tyr22) is a Phosphotyrosine; by Tyr-kinases. Positions 24–34 match the Nuclear localization signal motif; it reads KEVGVGMALRK. N-eicosanoyl ethanolamine is bound by residues Cys43 and Arg109. Cys120 and Cys127 are disulfide-bonded. 129–131 contacts (9Z,12Z)-octadecadienoate; it reads RVY. Tyr131 is an N-eicosanoyl ethanolamine binding site. Residue Tyr131 participates in hexadecanoate binding. Tyr131 bears the Phosphotyrosine mark.

The protein belongs to the calycin superfamily. Fatty-acid binding protein (FABP) family. In terms of assembly, monomer. Most abundant in lens and retina (found in the mueller cells), moderately abundant in heart and testis (found in the Sertoli cells), and present in very low amounts in lung.

The protein resides in the cytoplasm. Its subcellular location is the nucleus. It localises to the synapse. It is found in the postsynaptic density. The protein localises to the secreted. The enzyme catalyses hexadecanoate(out) = hexadecanoate(in). It carries out the reaction (9Z,12Z)-octadecadienoate(out) = (9Z,12Z)-octadecadienoate(in). It catalyses the reaction (9Z)-octadecenoate(out) = (9Z)-octadecenoate(in). Intracellular carrier for long-chain fatty acids and related active lipids, such as endocannabinoids, that regulate the metabolism and actions of the ligands they bind. In addition to the cytosolic transport, selectively delivers specific fatty acids from the cytosol to the nucleus, wherein they activate nuclear receptors. Delivers retinoic acid to the nuclear receptor peroxisome proliferator-activated receptor delta; which promotes proliferation and survival. May also serve as a synaptic carrier of endocannabinoid at central synapses and thus controls retrograde endocannabinoid signaling. Modulates inflammation by regulating PTGES induction via NF-kappa-B activation, and prostaglandin E2 (PGE2) biosynthesis during inflammation. This Bos taurus (Bovine) protein is Fatty acid-binding protein 5 (FABP5).